The primary structure comprises 670 residues: Methionine--tRNA ligase (670 aa).

The 'HIGH' region signature appears at 14 to 24 (PYANGHLHLGH). Zn(2+)-binding residues include C145, C148, C158, and C161. The 'KMSKS' region signature appears at 330–334 (KMSKS). K333 contacts ATP. In terms of domain architecture, tRNA-binding spans 570-670 (DFAKVDLRIA…AGALPGMKVK (101 aa)).

The protein belongs to the class-I aminoacyl-tRNA synthetase family. MetG type 1 subfamily. Homodimer. The cofactor is Zn(2+).

The protein resides in the cytoplasm. The enzyme catalyses tRNA(Met) + L-methionine + ATP = L-methionyl-tRNA(Met) + AMP + diphosphate. Functionally, is required not only for elongation of protein synthesis but also for the initiation of all mRNA translation through initiator tRNA(fMet) aminoacylation. This Legionella pneumophila (strain Paris) protein is Methionine--tRNA ligase.